We begin with the raw amino-acid sequence, 319 residues long: Transcription initiation factor IIB 6 (319 aa).

Basic and acidic residues predominate over residues 1–16; sequence MTDARMRSREQERTDE. Residues 1 to 33 are disordered; the sequence is MTDARMRSREQERTDETESESTDGCPECGGLVV. Residues 21-51 form a TFIIB-type zinc finger; that stretch reads STDGCPECGGLVVNDEEHGESVCADCGLVVE. Cys25, Cys28, Cys43, and Cys46 together coordinate Zn(2+). Residues 59 to 74 are compositionally biased toward basic and acidic residues; the sequence is PEWRAFDSKEKDEKSR. The disordered stretch occupies residues 59–89; sequence PEWRAFDSKEKDEKSRVGAPTTNTMHDKGLS. 2 tandem repeats follow at residues 137 to 220 and 231 to 312.

It belongs to the TFIIB family.

In terms of biological role, stabilizes TBP binding to an archaeal box-A promoter. Also responsible for recruiting RNA polymerase II to the pre-initiation complex (DNA-TBP-TFIIB). The polypeptide is Transcription initiation factor IIB 6 (Halobacterium salinarum (strain ATCC 700922 / JCM 11081 / NRC-1) (Halobacterium halobium)).